The sequence spans 260 residues: Ribosomal protein L11 methyltransferase (260 aa).

4 residues coordinate S-adenosyl-L-methionine: T119, G140, D162, and N203.

It belongs to the methyltransferase superfamily. PrmA family.

It localises to the cytoplasm. The catalysed reaction is L-lysyl-[protein] + 3 S-adenosyl-L-methionine = N(6),N(6),N(6)-trimethyl-L-lysyl-[protein] + 3 S-adenosyl-L-homocysteine + 3 H(+). Its function is as follows. Methylates ribosomal protein L11. The sequence is that of Ribosomal protein L11 methyltransferase from Thermosipho africanus (strain TCF52B).